The chain runs to 598 residues: Aspartate--tRNA ligase (598 aa).

L-aspartate is bound at residue Glu175. Residues 199-202 (QLFK) form an aspartate region. Arg221 is a binding site for L-aspartate. ATP contacts are provided by residues 221–223 (RDE) and Gln230. His450 is an L-aspartate binding site. Glu486 contributes to the ATP binding site. Arg493 contacts L-aspartate. ATP is bound at residue 538–541 (GLDR).

The protein belongs to the class-II aminoacyl-tRNA synthetase family. Type 1 subfamily. In terms of assembly, homodimer.

The protein localises to the cytoplasm. The enzyme catalyses tRNA(Asp) + L-aspartate + ATP = L-aspartyl-tRNA(Asp) + AMP + diphosphate. In terms of biological role, catalyzes the attachment of L-aspartate to tRNA(Asp) in a two-step reaction: L-aspartate is first activated by ATP to form Asp-AMP and then transferred to the acceptor end of tRNA(Asp). This Lactiplantibacillus plantarum (strain ATCC BAA-793 / NCIMB 8826 / WCFS1) (Lactobacillus plantarum) protein is Aspartate--tRNA ligase.